We begin with the raw amino-acid sequence, 176 residues long: Adenine phosphoribosyltransferase (176 aa).

The protein belongs to the purine/pyrimidine phosphoribosyltransferase family. In terms of assembly, homodimer.

Its subcellular location is the cytoplasm. The enzyme catalyses AMP + diphosphate = 5-phospho-alpha-D-ribose 1-diphosphate + adenine. The protein operates within purine metabolism; AMP biosynthesis via salvage pathway; AMP from adenine: step 1/1. Catalyzes a salvage reaction resulting in the formation of AMP, that is energically less costly than de novo synthesis. The sequence is that of Adenine phosphoribosyltransferase from Bacteroides thetaiotaomicron (strain ATCC 29148 / DSM 2079 / JCM 5827 / CCUG 10774 / NCTC 10582 / VPI-5482 / E50).